We begin with the raw amino-acid sequence, 4545 residues long: Prolow-density lipoprotein receptor-related protein 1 (4545 aa).

Residues 1 to 19 (MLTPPLLLLLPLLSALVSG) form the signal peptide. At 20–4424 (ATMDAPKTCS…SQQQPGHMAS (4405 aa)) the chain is on the extracellular side. 2 consecutive LDL-receptor class A domains span residues 26-67 (KTCS…ICPQ) and 71-111 (QRCP…HCRE). 6 disulfide bridges follow: Cys-28–Cys-41, Cys-35–Cys-54, Cys-48–Cys-65, Cys-73–Cys-86, Cys-80–Cys-99, and Cys-93–Cys-109. The region spanning 112–150 (LRANCSRMGCQHHCVPTPSGPTCYCNSSFQLQADGKTCK) is the EGF-like 1 domain. A glycan (N-linked (GlcNAc...) asparagine) is linked at Asn-115. 6 cysteine pairs are disulfide-bonded: Cys-116–Cys-125, Cys-121–Cys-134, Cys-136–Cys-149, Cys-155–Cys-165, Cys-161–Cys-174, and Cys-176–Cys-189. Asn-137 carries N-linked (GlcNAc...) asparagine glycosylation. An EGF-like 2; calcium-binding domain is found at 151–190 (DFDECSVYGTCSQLCTNTDGSFTCGCVEGYLLQPDNRSCK). N-linked (GlcNAc...) asparagine glycosylation is found at Asn-186, Asn-240, and Asn-275. 3 LDL-receptor class B repeats span residues 293 to 335 (GNFY…DPAM), 336 to 379 (GKVF…DLVS), and 380 to 423 (RLVY…FENY). Residue Asn-358 is glycosylated (N-linked (GlcNAc...) asparagine). The N-linked (GlcNAc...) asparagine glycan is linked to Asn-447. The 47-residue stretch at 475-521 (RSHACENDQYGKPGGCSDICLLANSHKARTCRCRSGFSLGSDGKSCK) folds into the EGF-like 3 domain. Disulfide bonds link Cys-479-Cys-494, Cys-490-Cys-505, and Cys-507-Cys-520. LDL-receptor class B repeat units follow at residues 572–614 (GFIY…DWMG), 615–660 (DNLY…DPLN), 661–711 (GWMY…DIPA), and 712–755 (GRLY…HGNY). Asn-730 is a glycosylation site (N-linked (GlcNAc...) asparagine). The region spanning 804–844 (GTNKCRVNNGGCSSLCLATPGSRQCACAEDQVLDTDGVTCL) is the EGF-like 4 domain. Intrachain disulfides connect Cys-808-Cys-819, Cys-815-Cys-828, Cys-830-Cys-843, Cys-855-Cys-867, Cys-862-Cys-880, Cys-874-Cys-891, Cys-896-Cys-908, Cys-903-Cys-921, Cys-915-Cys-932, Cys-937-Cys-949, Cys-944-Cys-962, Cys-956-Cys-972, Cys-977-Cys-990, Cys-985-Cys-1003, Cys-997-Cys-1012, Cys-1016-Cys-1028, Cys-1023-Cys-1041, Cys-1035-Cys-1052, Cys-1063-Cys-1076, Cys-1070-Cys-1089, Cys-1083-Cys-1098, Cys-1105-Cys-1119, Cys-1113-Cys-1132, Cys-1126-Cys-1141, Cys-1146-Cys-1160, Cys-1153-Cys-1173, Cys-1167-Cys-1183, Cys-1186-Cys-1197, Cys-1193-Cys-1207, Cys-1209-Cys-1222, Cys-1228-Cys-1238, Cys-1234-Cys-1247, and Cys-1249-Cys-1262. LDL-receptor class A domains are found at residues 853–893 (PQCQ…LCHQ), 894–934 (HTCP…TCSA), 935–974 (RTCP…SCAY), 975–1014 (PTCF…GCSH), 1014–1054 (HSCS…NCTN), 1061–1100 (GGCH…SCEG), 1103–1143 (HVCD…NCEA), and 1144–1183 (LACR…GELC). Positions 872, 875, 877, 879, 885, and 886 each coordinate Ca(2+). Asn-929 carries N-linked (GlcNAc...) asparagine glycosylation. Residues Trp-1033, Asp-1036, Asp-1038, Asp-1040, Asp-1046, and Glu-1047 each coordinate Ca(2+). The N-linked (GlcNAc...) asparagine glycan is linked to Asn-1051. Trp-1081, Asp-1084, Asp-1086, Asp-1088, Asp-1094, and Glu-1095 together coordinate Ca(2+). Residues Asn-1155 and Asn-1156 are each glycosylated (N-linked (GlcNAc...) asparagine). EGF-like domains lie at 1184–1223 (DQCS…HTCQ) and 1224–1263 (IQSY…ESCR). Asn-1196 and Asn-1219 each carry an N-linked (GlcNAc...) asparagine glycan. LDL-receptor class B repeat units lie at residues 1310–1356 (SALY…DWIA), 1357–1399 (GNIY…DPRD), 1400–1446 (GILF…DYLE), 1447–1491 (KRIL…YGGE), and 1492–1532 (VYWT…YHPS). The N-linked (GlcNAc...) asparagine glycan is linked to Asn-1512. The region spanning 1537–1580 (APNPCEANGGRGPCSHLCLINYNRTVSCACPHLMKLHKDNTTCY) is the EGF-like 7 domain. 3 cysteine pairs are disulfide-bonded: Cys-1541–Cys-1554, Cys-1550–Cys-1564, and Cys-1566–Cys-1579. 4 N-linked (GlcNAc...) asparagine glycosylation sites follow: Asn-1559, Asn-1576, Asn-1617, and Asn-1646. LDL-receptor class B repeat units lie at residues 1628–1670 (QRVY…DWVS), 1671–1714 (RNLF…HPLR), 1715–1754 (GKLY…DFPE), and 1755–1799 (SKLY…MGDK). N-linked (GlcNAc...) asparagine glycans are attached at residues Asn-1724, Asn-1734, Asn-1764, and Asn-1826. In terms of domain architecture, EGF-like 8 spans 1847–1888 (GTNPCSVNNGDCSQLCLPTSETTRSCMCTAGYSLRSGQQACE). Disulfide bonds link Cys-1851-Cys-1862, Cys-1858-Cys-1872, and Cys-1874-Cys-1887. Asn-1934 carries an N-linked (GlcNAc...) asparagine glycan. 4 LDL-receptor class B repeats span residues 1935–1977 (DTIY…DWIA), 1978–2020 (GNIY…HPEK), 2021–2064 (GYLF…DYQG), and 2065–2108 (GKLY…FEDF). Asn-1996 carries an N-linked (GlcNAc...) asparagine glycan. Lys-2010 is modified (N6-acetyllysine). Asn-2049 is a glycosylation site (N-linked (GlcNAc...) asparagine). N-linked (GlcNAc...) asparagine glycosylation is found at Asn-2118 and Asn-2128. The region spanning 2156–2196 (GTNVCAVANGGCQQLCLYRGGGQRACACAHGMLAEDGASCR) is the EGF-like 9 domain. 3 cysteine pairs are disulfide-bonded: Cys-2160–Cys-2171, Cys-2167–Cys-2181, and Cys-2183–Cys-2195. 5 LDL-receptor class B repeats span residues 2254-2295 (NRIF…HRGW), 2296-2344 (DTLY…DECQ), 2345-2389 (NLMF…DHRA), 2390-2432 (EKLY…YGEH), and 2433-2474 (IFWT…VAND). A glycan (N-linked (GlcNAc...) asparagine) is linked at Asn-2473. Residues 2479-2519 (ELSPCRINNGGCQDLCLLTHQGHVNCSCRGGRILQEDFTCR) enclose the EGF-like 10 domain. 3 disulfide bridges follow: Cys-2483/Cys-2494, Cys-2490/Cys-2504, and Cys-2506/Cys-2518. N-linked (GlcNAc...) asparagine glycosylation is present at Asn-2503. N-linked (GlcNAc...) asparagine glycosylation is present at Asn-2522. 7 consecutive LDL-receptor class A domains span residues 2523–2564 (SSCR…YCNS), 2565–2603 (RRCK…PCNK), 2604–2642 (TACG…NCSA), 2643–2691 (TDCS…DCPG), 2695–2733 (PRCP…HCNK), 2733–2772 (KFCS…HCEG), and 2773–2815 (KTCG…GCLY). Cystine bridges form between Cys-2525–Cys-2538, Cys-2533–Cys-2551, Cys-2545–Cys-2562, Cys-2567–Cys-2579, Cys-2574–Cys-2592, and Cys-2586–Cys-2601. Asn-2602 is a glycosylation site (N-linked (GlcNAc...) asparagine). Disulfide bonds link Cys-2606-Cys-2618, Cys-2613-Cys-2631, Cys-2625-Cys-2640, Cys-2645-Cys-2667, Cys-2661-Cys-2680, Cys-2674-Cys-2689, Cys-2697-Cys-2709, Cys-2704-Cys-2722, Cys-2716-Cys-2731, Cys-2735-Cys-2747, Cys-2742-Cys-2760, Cys-2754-Cys-2770, Cys-2775-Cys-2788, Cys-2782-Cys-2801, and Cys-2795-Cys-2813. N-linked (GlcNAc...) asparagine glycosylation is found at Asn-2621 and Asn-2639. Asn-2816 is a glycosylation site (N-linked (GlcNAc...) asparagine). LDL-receptor class A domains follow at residues 2817–2856 (STCD…ECEY), 2857–2900 (PTCG…HCTS), and 2903–2941 (HKCN…RGCH). 15 disulfide bridges follow: Cys-2819–Cys-2831, Cys-2826–Cys-2844, Cys-2838–Cys-2854, Cys-2859–Cys-2871, Cys-2866–Cys-2885, Cys-2879–Cys-2898, Cys-2905–Cys-2918, Cys-2913–Cys-2931, Cys-2925–Cys-2940, Cys-2945–Cys-2957, Cys-2953–Cys-2966, Cys-2968–Cys-2981, Cys-2987–Cys-2997, Cys-2993–Cys-3006, and Cys-3008–Cys-3022. Asn-2906 is a glycosylation site (N-linked (GlcNAc...) asparagine). The EGF-like 11 domain occupies 2942-2982 (VNECLSRKLSGCSQDCEDLKIGFKCRCRPGFRLKDDGRTCA). In terms of domain architecture, EGF-like 12; calcium-binding spans 2983-3023 (DLDECSTTFPCSQLCINTHGSYKCLCVEGYAPRGGDPHSCK). N-linked (GlcNAc...) asparagine glycosylation is found at Asn-3049 and Asn-3090. LDL-receptor class B repeat units follow at residues 3070–3114 (QMIY…DWVG), 3115–3157 (GNLY…DVQN), 3158–3201 (GYLY…DYVT), 3202–3244 (ERIY…FEDY), and 3245–3285 (VYWT…FHAL). N-linked (GlcNAc...) asparagine glycosylation occurs at Asn-3265. Positions 3291–3332 (PNHPCKVNNGGCSNLCLLSPGGGHKCACPTNFYLGGDGRTCV) constitute an EGF-like 13 domain. Disulfide bonds link Cys-3295-Cys-3306, Cys-3302-Cys-3316, and Cys-3318-Cys-3331. LDL-receptor class A domains follow at residues 3333–3372 (SNCT…DCPE), 3373–3411 (FKCR…NCDI), 3412–3451 (HVCL…DCPE), 3452–3492 (VTCA…NCTQ), 3493–3534 (MTCG…ECDE), 3535–3573 (RTCE…SCTP), 3574–3612 (RPCS…DCTP), 3612–3650 (PRCD…ACGT), 3653–3693 (RTCP…ECAR), 3694–3734 (FICP…DCEP), and 3740–3779 (PHCK…DCSI). Asn-3334 carries an N-linked (GlcNAc...) asparagine glycan. 39 cysteine pairs are disulfide-bonded: Cys-3335-Cys-3347, Cys-3342-Cys-3360, Cys-3354-Cys-3370, Cys-3375-Cys-3387, Cys-3382-Cys-3400, Cys-3394-Cys-3409, Cys-3414-Cys-3427, Cys-3421-Cys-3440, Cys-3434-Cys-3449, Cys-3454-Cys-3467, Cys-3461-Cys-3480, Cys-3474-Cys-3490, Cys-3495-Cys-3508, Cys-3502-Cys-3521, Cys-3515-Cys-3532, Cys-3537-Cys-3549, Cys-3544-Cys-3562, Cys-3556-Cys-3571, Cys-3576-Cys-3588, Cys-3583-Cys-3601, Cys-3595-Cys-3610, Cys-3614-Cys-3626, Cys-3621-Cys-3639, Cys-3633-Cys-3648, Cys-3655-Cys-3667, Cys-3662-Cys-3680, Cys-3674-Cys-3691, Cys-3696-Cys-3710, Cys-3704-Cys-3723, Cys-3717-Cys-3732, Cys-3742-Cys-3755, Cys-3750-Cys-3768, Cys-3762-Cys-3777, Cys-3786-Cys-3799, Cys-3793-Cys-3808, Cys-3810-Cys-3823, Cys-3829-Cys-3839, Cys-3835-Cys-3848, and Cys-3850-Cys-3861. Asn-3489 carries N-linked (GlcNAc...) asparagine glycosylation. N-linked (GlcNAc...) asparagine glycosylation occurs at Asn-3663. 2 consecutive EGF-like domains span residues 3782-3824 (KLTS…PGCQ) and 3825-3862 (DINE…NTCK). Residue Asn-3789 is glycosylated (N-linked (GlcNAc...) asparagine). N-linked (GlcNAc...) asparagine glycosylation is present at Asn-3840. LDL-receptor class B repeat units follow at residues 3913–3955 (GRVY…HLNI), 3971–4013 (GNVY…DPLR), 4014–4057 (GTMY…DYHN), and 4058–4102 (ERLY…FEDY). Positions 3941–3944 (RHRR) match the Recognition site for proteolytical processing motif. N-linked (GlcNAc...) asparagine glycosylation occurs at Asn-3954. Residues Asn-4076 and Asn-4126 are each glycosylated (N-linked (GlcNAc...) asparagine). EGF-like domains follow at residues 4148 to 4184 (VTNP…GTCV), 4197 to 4233 (RPGT…DKCE), 4233 to 4269 (ELDQ…PKCT), 4269 to 4305 (TAQV…DRCQ), 4305 to 4341 (QYRQ…PRCE), 4341 to 4376 (EVNK…PSCL), and 4374 to 4410 (SCLT…PRCE). 17 disulfides stabilise this stretch: Cys-4152-Cys-4161, Cys-4157-Cys-4170, Cys-4172-Cys-4183, Cys-4201-Cys-4211, Cys-4205-Cys-4221, Cys-4223-Cys-4232, Cys-4237-Cys-4247, Cys-4241-Cys-4257, Cys-4259-Cys-4268, Cys-4273-Cys-4283, Cys-4277-Cys-4293, Cys-4295-Cys-4304, Cys-4309-Cys-4319, Cys-4313-Cys-4329, Cys-4331-Cys-4340, Cys-4345-Cys-4353, and Cys-4348-Cys-4364. The N-linked (GlcNAc...) asparagine glycan is linked to Asn-4180. Residues Asn-4279 and Asn-4280 are each glycosylated (N-linked (GlcNAc...) asparagine). Asn-4365 is a glycosylation site (N-linked (GlcNAc...) asparagine). Intrachain disulfides connect Cys-4366/Cys-4375, Cys-4378/Cys-4388, Cys-4382/Cys-4398, and Cys-4400/Cys-4409. Residues 4425-4445 (ILIPLLLLLLLLLVAGVVFWY) form a helical membrane-spanning segment. The Cytoplasmic segment spans residues 4446-4545 (KRRVRGAKGF…PEDEIGDPLA (100 aa)). Residues 4446 to 4545 (KRRVRGAKGF…PEDEIGDPLA (100 aa)) are interaction with MAFB. Position 4461 is a phosphothreonine (Thr-4461). An NPXY motif motif is present at residues 4503-4508 (FTNPVY). The residue at position 4508 (Tyr-4508) is a Phosphotyrosine. Ser-4518, Ser-4521, and Ser-4524 each carry phosphoserine.

Belongs to the LDLR family. In terms of assembly, heterodimer of an 85-kDa membrane-bound carboxyl subunit and a non-covalently attached 515-kDa N-terminal subunit. Intracellular domain interacts with MAFB. Found in a complex with PID1/PCLI1, LRP1 and CUBNI. Interacts with SNX17, PID1/PCLI1, PDGF and CUBN. The intracellular domain interacts with SHC1, GULP1 and DAB1. Can weakly interact (via NPXY motif) with DAB2 (via PID domain); the interaction is enhanced by tyrosine phosphorylation of the NPXY motif. Interacts with MDK; promotes neuronal survival. Interacts with LRPAP1; this interaction is followed by rapid internalization. Interacts with uPA/PLAU and PAI1/SERPINE1, either individually or in complex with each other, leading to rapid endocytosis; this interaction is abolished in the presence of LRPAP1/RAP. Also interacts with tPA/PLAT alone or in complex with SERPINE1. Interacts with the urokinase receptor PLAUR; this interaction leads to PLAUR internalization and is impaired in the presence of SORL1. Interacts with PDGFB. Interacts with TAU/MAPT, leading to endocytosis; this interaction is reduced in the presence of LRPAP1/RAP. Interacts with IGFBP3. Interacts with ADGRG6. In terms of processing, phosphorylated on serine and threonine residues. Phosphorylated on tyrosine residues upon stimulation with PDGF. Tyrosine phosphorylation promotes interaction with SHC1. Post-translationally, cleaved into a 85 kDa membrane-spanning subunit (LRP-85) and a 515 kDa large extracellular domain (LRP-515) that remains non-covalently associated. Gamma-secretase-dependent cleavage of LRP-85 releases the intracellular domain from the membrane.

The protein localises to the cell membrane. It is found in the membrane. The protein resides in the coated pit. It localises to the golgi outpost. Its subcellular location is the cytoplasm. The protein localises to the cytoskeleton. It is found in the microtubule organizing center. The protein resides in the nucleus. In terms of biological role, endocytic receptor involved in endocytosis and in phagocytosis of apoptotic cells. Required for early embryonic development. Involved in cellular lipid homeostasis. Involved in the plasma clearance of chylomicron remnants and activated LRPAP1 (alpha 2-macroglobulin), as well as the local metabolism of complexes between plasminogen activators and their endogenous inhibitors. Acts as an alpha-2-macroglobulin receptor. Acts as a TAU/MAPT receptor and controls the endocytosis of TAU/MAPT as well as its subsequent spread. May modulate cellular events, such as APP metabolism, kinase-dependent intracellular signaling, neuronal calcium signaling as well as neurotransmission. Also acts as a receptor for IGFBP3 to mediate cell growth inhibition. (Microbial infection) Functions as a receptor for Vibrio cholerae cholix toxin and for Pseudomonas aeruginosa exotoxin A. This Mus musculus (Mouse) protein is Prolow-density lipoprotein receptor-related protein 1.